The chain runs to 187 residues: Hypoxanthine/guanine phosphoribosyltransferase (187 aa).

The protein belongs to the purine/pyrimidine phosphoribosyltransferase family. Archaeal HPRT subfamily. As to quaternary structure, homodimer.

The protein localises to the cytoplasm. The enzyme catalyses IMP + diphosphate = hypoxanthine + 5-phospho-alpha-D-ribose 1-diphosphate. It carries out the reaction GMP + diphosphate = guanine + 5-phospho-alpha-D-ribose 1-diphosphate. It participates in purine metabolism; IMP biosynthesis via salvage pathway; IMP from hypoxanthine: step 1/1. Catalyzes a salvage reaction resulting in the formation of IMP that is energically less costly than de novo synthesis. This Methanococcus voltae (strain ATCC BAA-1334 / A3) protein is Hypoxanthine/guanine phosphoribosyltransferase.